Here is a 155-residue protein sequence, read N- to C-terminus: Large ribosomal subunit protein eL24B (155 aa).

Serine 7 is modified (phosphoserine). Residues 66 to 155 (EVAKKRSRKT…AFQKVAATSR (90 aa)) are disordered. The segment covering 89–129 (LIKERRSLKPEVRKANREEKLKANKEKKRAEKAARKAEKAK) has biased composition (basic and acidic residues).

The protein belongs to the eukaryotic ribosomal protein eL24 family. As to quaternary structure, component of the large ribosomal subunit (LSU). Mature yeast ribosomes consist of a small (40S) and a large (60S) subunit. The 40S small subunit contains 1 molecule of ribosomal RNA (18S rRNA) and 33 different proteins (encoded by 57 genes). The large 60S subunit contains 3 rRNA molecules (25S, 5.8S and 5S rRNA) and 46 different proteins (encoded by 81 genes).

The protein localises to the cytoplasm. In terms of biological role, component of the ribosome, a large ribonucleoprotein complex responsible for the synthesis of proteins in the cell. The small ribosomal subunit (SSU) binds messenger RNAs (mRNAs) and translates the encoded message by selecting cognate aminoacyl-transfer RNA (tRNA) molecules. The large subunit (LSU) contains the ribosomal catalytic site termed the peptidyl transferase center (PTC), which catalyzes the formation of peptide bonds, thereby polymerizing the amino acids delivered by tRNAs into a polypeptide chain. The nascent polypeptides leave the ribosome through a tunnel in the LSU and interact with protein factors that function in enzymatic processing, targeting, and the membrane insertion of nascent chains at the exit of the ribosomal tunnel. The chain is Large ribosomal subunit protein eL24B from Saccharomyces cerevisiae (strain ATCC 204508 / S288c) (Baker's yeast).